The sequence spans 217 residues: Protein-methionine-sulfoxide reductase heme-binding subunit MsrQ (217 aa).

Transmembrane regions (helical) follow at residues 82-102 (MLGL…LLVD), 118-138 (PFIT…ATST), 150-170 (WQWL…HYWW), and 180-200 (EVSI…WWVW).

This sequence belongs to the MsrQ family. As to quaternary structure, heterodimer of a catalytic subunit (MsrP) and a heme-binding subunit (MsrQ). FMN is required as a cofactor. Requires heme b as cofactor.

Its subcellular location is the cell inner membrane. Functionally, part of the MsrPQ system that repairs oxidized periplasmic proteins containing methionine sulfoxide residues (Met-O), using respiratory chain electrons. Thus protects these proteins from oxidative-stress damage caused by reactive species of oxygen and chlorine generated by the host defense mechanisms. MsrPQ is essential for the maintenance of envelope integrity under bleach stress, rescuing a wide series of structurally unrelated periplasmic proteins from methionine oxidation. MsrQ provides electrons for reduction to the reductase catalytic subunit MsrP, using the quinone pool of the respiratory chain. In Ralstonia nicotianae (strain ATCC BAA-1114 / GMI1000) (Ralstonia solanacearum), this protein is Protein-methionine-sulfoxide reductase heme-binding subunit MsrQ.